A 254-amino-acid chain; its full sequence is MRVVYWVGTSWKMNKTLAEALDFAERLAGFIPGFDDRIQPFVIPPFTAVREVKRALSSTRIKVGAQNMHWADAGAWTGEISPPMLRDCGLDLVELGHSERREHFGETDRTVGLKTAAAVKHGMIPLICVGETLAERESGQADAVLSAQVEGALQFLEGEAKTAKILFAYEPVWAIGDKGIPASADYADKQQALIKTVAGALLPSVPPVLYGGSVNPGNAAELVGQPNIDGLFIGRSAWQADGYIDILGRASAAI.

The active-site Electrophile is the H97. Residue E170 is the Proton acceptor of the active site. The substrate site is built by G176 and S213.

This sequence belongs to the triosephosphate isomerase family. As to quaternary structure, homodimer.

The protein resides in the cytoplasm. It carries out the reaction L-erythrulose 1-phosphate = D-erythrulose 4-phosphate. It participates in carbohydrate metabolism; erythritol degradation. Its function is as follows. Catalyzes the isomerization of D-erythrulose-4P to L-erythrulose-1P. The polypeptide is L-erythrulose-1-phosphate isomerase (Mesorhizobium japonicum (strain LMG 29417 / CECT 9101 / MAFF 303099) (Mesorhizobium loti (strain MAFF 303099))).